A 382-amino-acid polypeptide reads, in one-letter code: 1-deoxy-D-xylulose 5-phosphate reductoisomerase (382 aa).

Positions 11, 12, 13, 14, and 123 each coordinate NADPH. K124 contacts 1-deoxy-D-xylulose 5-phosphate. E125 provides a ligand contact to NADPH. D149 contacts Mn(2+). 1-deoxy-D-xylulose 5-phosphate is bound by residues S150, E151, S173, and H196. E151 lines the Mn(2+) pocket. G202 contributes to the NADPH binding site. Residues S209, N214, K215, and E218 each coordinate 1-deoxy-D-xylulose 5-phosphate. E218 contributes to the Mn(2+) binding site.

The protein belongs to the DXR family. The cofactor is Mg(2+). It depends on Mn(2+) as a cofactor.

The enzyme catalyses 2-C-methyl-D-erythritol 4-phosphate + NADP(+) = 1-deoxy-D-xylulose 5-phosphate + NADPH + H(+). The protein operates within isoprenoid biosynthesis; isopentenyl diphosphate biosynthesis via DXP pathway; isopentenyl diphosphate from 1-deoxy-D-xylulose 5-phosphate: step 1/6. In terms of biological role, catalyzes the NADPH-dependent rearrangement and reduction of 1-deoxy-D-xylulose-5-phosphate (DXP) to 2-C-methyl-D-erythritol 4-phosphate (MEP). The polypeptide is 1-deoxy-D-xylulose 5-phosphate reductoisomerase (Phocaeicola vulgatus (strain ATCC 8482 / DSM 1447 / JCM 5826 / CCUG 4940 / NBRC 14291 / NCTC 11154) (Bacteroides vulgatus)).